The following is a 591-amino-acid chain: L-fucose isomerase (591 aa).

Catalysis depends on proton acceptor residues Glu337 and Asp361. Mn(2+) is bound by residues Glu337, Asp361, and His528.

The protein belongs to the L-fucose isomerase family. In terms of assembly, homohexamer. Requires Mn(2+) as cofactor.

The protein resides in the cytoplasm. It carries out the reaction L-fucose = L-fuculose. Its pathway is carbohydrate degradation; L-fucose degradation; L-lactaldehyde and glycerone phosphate from L-fucose: step 1/3. In terms of biological role, converts the aldose L-fucose into the corresponding ketose L-fuculose. The sequence is that of L-fucose isomerase from Escherichia coli (strain UTI89 / UPEC).